A 295-amino-acid chain; its full sequence is Hepatic leukemia factor (295 aa).

The segment covering 37–52 has biased composition (basic and acidic residues); it reads EDAFSKDKDKEKKLDD. Disordered regions lie at residues 37 to 70 and 93 to 167; these read EDAFSKDKDKEKKLDDESNSPTVPQSAFLGPTLW and SENG…IDPD. The region spanning 225-288 is the bZIP domain; the sequence is DDKYWARRRK…GKCKNILAKY (64 aa). The interval 227 to 247 is basic motif; that stretch reads KYWARRRKNNMAAKRSRDARR. Positions 248 to 255 are leucine-zipper; the sequence is LKENQIAI.

The protein belongs to the bZIP family. PAR subfamily. In terms of assembly, binds DNA specifically as homodimer or heterodimer with other PAR factors. In terms of tissue distribution, highly expressed in liver; lower levels in lung and kidney.

Its subcellular location is the nucleus. This is Hepatic leukemia factor (HLF) from Homo sapiens (Human).